We begin with the raw amino-acid sequence, 131 residues long: Small ribosomal subunit protein bS6 (131 aa).

The disordered stretch occupies residues 98 to 131 (EASPMVKAKDERRERREDFANETADDSEAGDSEE). Residues 104–116 (KAKDERRERREDF) show a composition bias toward basic and acidic residues. Over residues 120–131 (TADDSEAGDSEE) the composition is skewed to acidic residues.

It belongs to the bacterial ribosomal protein bS6 family.

Functionally, binds together with bS18 to 16S ribosomal RNA. This Klebsiella pneumoniae (strain 342) protein is Small ribosomal subunit protein bS6.